Here is a 493-residue protein sequence, read N- to C-terminus: Glutamate--tRNA ligase (493 aa).

A 'HIGH' region motif is present at residues 10–20 (PSPTGFVHIGS). Residues Cys114, Cys116, Cys141, and Glu143 each coordinate Zn(2+). Positions 258–262 (KLSKR) match the 'KMSKS' region motif. Lys261 contributes to the ATP binding site.

The protein belongs to the class-I aminoacyl-tRNA synthetase family. Glutamate--tRNA ligase type 1 subfamily. As to quaternary structure, monomer. Zn(2+) is required as a cofactor.

Its subcellular location is the cytoplasm. The enzyme catalyses tRNA(Glu) + L-glutamate + ATP = L-glutamyl-tRNA(Glu) + AMP + diphosphate. In terms of biological role, catalyzes the attachment of glutamate to tRNA(Glu) in a two-step reaction: glutamate is first activated by ATP to form Glu-AMP and then transferred to the acceptor end of tRNA(Glu). This is Glutamate--tRNA ligase from Alkaliphilus metalliredigens (strain QYMF).